Here is a 206-residue protein sequence, read N- to C-terminus: Triafestin-2 (206 aa).

The signal sequence occupies residues 1 to 18 (MKTILAVIFFGILAFAFA). Asparagine 25, asparagine 55, and asparagine 178 each carry an N-linked (GlcNAc...) asparagine glycan.

Belongs to the calycin superfamily. Triabin family. Interacts with host coagulation factor XII (F12) (inactive and activated) (via amino acids 1-77). Interacts with host high molecular weight kininogen (KNG1) (via amino acids 402-532). In terms of tissue distribution, salivary gland (at protein level).

Its subcellular location is the secreted. Its activity is regulated as follows. Zn(2+) modulates binding to host coagulation factor XII (F12) and high molecular weight kininogen (KNG1). Suppresses activation of the host plasma kallikrein-kinin system, leading to inhibition of the intrinsic coagulation pathway. Blocks host coagulation factor XII (F12) and prekallikrein (KLKB1) reciprocal activation without affecting their amidolytic activities. Blocks binding of host F12 and high molecular weight kininogen (KNG1) to negatively charged surfaces. Attenuates generation of bradykinin by interfering with activation of host kallikrein-kinin system. This chain is Triafestin-2, found in Triatoma infestans (Assassin bug).